The chain runs to 609 residues: UvrABC system protein C (609 aa).

The GIY-YIG domain maps to 16–94 (SSPGVYRMYD…IKQYMPKYNV (79 aa)). The UVR domain maps to 203-238 (HQVMSVLVGKMEQAASDMRYEQAALYRDQITALRRV).

The protein belongs to the UvrC family. Interacts with UvrB in an incision complex.

It is found in the cytoplasm. In terms of biological role, the UvrABC repair system catalyzes the recognition and processing of DNA lesions. UvrC both incises the 5' and 3' sides of the lesion. The N-terminal half is responsible for the 3' incision and the C-terminal half is responsible for the 5' incision. The chain is UvrABC system protein C from Shewanella halifaxensis (strain HAW-EB4).